A 418-amino-acid polypeptide reads, in one-letter code: Gamma-glutamyl phosphate reductase (418 aa).

Belongs to the gamma-glutamyl phosphate reductase family.

It localises to the cytoplasm. It carries out the reaction L-glutamate 5-semialdehyde + phosphate + NADP(+) = L-glutamyl 5-phosphate + NADPH + H(+). Its pathway is amino-acid biosynthesis; L-proline biosynthesis; L-glutamate 5-semialdehyde from L-glutamate: step 2/2. Functionally, catalyzes the NADPH-dependent reduction of L-glutamate 5-phosphate into L-glutamate 5-semialdehyde and phosphate. The product spontaneously undergoes cyclization to form 1-pyrroline-5-carboxylate. This Citrifermentans bemidjiense (strain ATCC BAA-1014 / DSM 16622 / JCM 12645 / Bem) (Geobacter bemidjiensis) protein is Gamma-glutamyl phosphate reductase.